We begin with the raw amino-acid sequence, 1175 residues long: 1-phosphatidylinositol 4,5-bisphosphate phosphodiesterase beta-4 (1175 aa).

Alanine 2 is modified (N-acetylalanine). The 151-residue stretch at 313–463 folds into the PI-PLC X-box domain; the sequence is QEMDHPLAHY…LKRKILIKNK (151 aa). Residues histidine 328 and histidine 375 contribute to the active site. The segment at 482–511 is disordered; that stretch reads EAGESASPANILEDDNEEEIESADQEEEAH. Residues 493 to 508 show a composition bias toward acidic residues; that stretch reads LEDDNEEEIESADQEE. The 117-residue stretch at 565 to 681 folds into the PI-PLC Y-box domain; sequence LSTMINYAQP…GYLLKPDFMR (117 aa). In terms of domain architecture, C2 spans 684–809; it reads DRTFDPFSET…SLRNEGNKPL (126 aa). Disordered stretches follow at residues 863 to 895 and 1082 to 1110; these read ADVP…ELRP and KISM…VREL. Composition is skewed to polar residues over residues 881-895 and 1085-1094; these read AKAN…ELRP and MENSKAISQD. Phosphothreonine is present on threonine 886. Residues 1095–1109 show a composition bias toward basic and acidic residues; the sequence is KSIKNKAERERRVRE.

Requires Ca(2+) as cofactor. In terms of tissue distribution, preferentially expressed in the retina.

It localises to the cell membrane. It catalyses the reaction a 1,2-diacyl-sn-glycero-3-phospho-(1D-myo-inositol-4,5-bisphosphate) + H2O = 1D-myo-inositol 1,4,5-trisphosphate + a 1,2-diacyl-sn-glycerol + H(+). It carries out the reaction a 1,2-diacyl-sn-glycero-3-phospho-(1D-myo-inositol) + H2O = 1D-myo-inositol 1-phosphate + a 1,2-diacyl-sn-glycerol + H(+). Its function is as follows. Activated phosphatidylinositol-specific phospholipase C enzymes catalyze the production of the second messenger molecules diacylglycerol (DAG) and inositol 1,4,5-trisphosphate (IP3) involved in G-protein coupled receptor signaling pathways. PLCB4 is a direct effector of the endothelin receptor signaling pathway that plays an essential role in lower jaw and middle ear structures development. The sequence is that of 1-phosphatidylinositol 4,5-bisphosphate phosphodiesterase beta-4 from Homo sapiens (Human).